Here is a 337-residue protein sequence, read N- to C-terminus: Glyceraldehyde-3-phosphate dehydrogenase, cytosolic (337 aa).

NAD(+) contacts are provided by residues 13 to 14 (RI), D35, and R82. Residues 153–155 (SCT), T184, 213–214 (TG), and R236 contribute to the D-glyceraldehyde 3-phosphate site. C154 functions as the Nucleophile in the catalytic mechanism. Position 318 (N318) interacts with NAD(+).

Belongs to the glyceraldehyde-3-phosphate dehydrogenase family. In terms of assembly, homotetramer.

It localises to the cytoplasm. The enzyme catalyses D-glyceraldehyde 3-phosphate + phosphate + NAD(+) = (2R)-3-phospho-glyceroyl phosphate + NADH + H(+). It functions in the pathway carbohydrate degradation; glycolysis; pyruvate from D-glyceraldehyde 3-phosphate: step 1/5. Functionally, key enzyme in glycolysis that catalyzes the first step of the pathway by converting D-glyceraldehyde 3-phosphate (G3P) into 3-phospho-D-glyceroyl phosphate. Essential for the maintenance of cellular ATP levels and carbohydrate metabolism. The protein is Glyceraldehyde-3-phosphate dehydrogenase, cytosolic (GAPC) of Antirrhinum majus (Garden snapdragon).